The sequence spans 261 residues: Segregation and condensation protein A (261 aa).

Belongs to the ScpA family. Component of a cohesin-like complex composed of ScpA, ScpB and the Smc homodimer, in which ScpA and ScpB bind to the head domain of Smc. The presence of the three proteins is required for the association of the complex with DNA.

Its subcellular location is the cytoplasm. Functionally, participates in chromosomal partition during cell division. May act via the formation of a condensin-like complex containing Smc and ScpB that pull DNA away from mid-cell into both cell halves. This chain is Segregation and condensation protein A, found in Leptospira interrogans serogroup Icterohaemorrhagiae serovar copenhageni (strain Fiocruz L1-130).